Reading from the N-terminus, the 269-residue chain is Ribonuclease HII (269 aa).

The 187-residue stretch at 83-269 folds into the RNase H type-2 domain; the sequence is YLIAGVDEVG…HRMSFLTNIL (187 aa). A divalent metal cation contacts are provided by Asp89, Glu90, and Asp185.

The protein belongs to the RNase HII family. The cofactor is Mn(2+). Requires Mg(2+) as cofactor.

It is found in the cytoplasm. The enzyme catalyses Endonucleolytic cleavage to 5'-phosphomonoester.. In terms of biological role, endonuclease that specifically degrades the RNA of RNA-DNA hybrids. The polypeptide is Ribonuclease HII (Clostridium botulinum (strain Langeland / NCTC 10281 / Type F)).